A 390-amino-acid polypeptide reads, in one-letter code: Succinyl-diaminopimelate desuccinylase (390 aa).

Histidine 75 lines the Zn(2+) pocket. Aspartate 77 is an active-site residue. Residue aspartate 108 participates in Zn(2+) binding. Catalysis depends on glutamate 141, which acts as the Proton acceptor. 3 residues coordinate Zn(2+): glutamate 142, glutamate 170, and histidine 359.

The protein belongs to the peptidase M20A family. DapE subfamily. Homodimer. Requires Zn(2+) as cofactor. Co(2+) is required as a cofactor.

It carries out the reaction N-succinyl-(2S,6S)-2,6-diaminopimelate + H2O = (2S,6S)-2,6-diaminopimelate + succinate. It participates in amino-acid biosynthesis; L-lysine biosynthesis via DAP pathway; LL-2,6-diaminopimelate from (S)-tetrahydrodipicolinate (succinylase route): step 3/3. Its function is as follows. Catalyzes the hydrolysis of N-succinyl-L,L-diaminopimelic acid (SDAP), forming succinate and LL-2,6-diaminopimelate (DAP), an intermediate involved in the bacterial biosynthesis of lysine and meso-diaminopimelic acid, an essential component of bacterial cell walls. This chain is Succinyl-diaminopimelate desuccinylase, found in Maricaulis maris (strain MCS10) (Caulobacter maris).